We begin with the raw amino-acid sequence, 299 residues long: tRNA uridine(34) hydroxylase (299 aa).

Positions 132–226 (AGRPVVMLDT…YFEEVGGAHY (95 aa)) constitute a Rhodanese domain. Catalysis depends on Cys-186, which acts as the Cysteine persulfide intermediate.

The protein belongs to the TrhO family.

The enzyme catalyses uridine(34) in tRNA + AH2 + O2 = 5-hydroxyuridine(34) in tRNA + A + H2O. In terms of biological role, catalyzes oxygen-dependent 5-hydroxyuridine (ho5U) modification at position 34 in tRNAs. This chain is tRNA uridine(34) hydroxylase, found in Burkholderia mallei (strain NCTC 10247).